Consider the following 1082-residue polypeptide: Protein SPT23 (1082 aa).

Disordered regions lie at residues 315–346 (NASN…PQSD), 376–417 (NNNN…FSDI), and 457–476 (ASAR…FMST). Residues 316–328 (ASNTTTPTSTSNA) show a composition bias toward low complexity. Residues 329–346 (QVSPMTNDTRSFSSPQSD) are compositionally biased toward polar residues. Composition is skewed to low complexity over residues 376–391 (NNNN…KTNT) and 399–416 (HFPS…SFSD). S468 is subject to Phosphoserine. The IPT/TIG domain occupies 508–585 (PSIQRVIPAQ…DPSETSMRNN (78 aa)). ANK repeat units lie at residues 709–738 (RGRT…HLND) and 742–771 (FGFT…NIMK).

In terms of biological role, dosage-dependent suppressor of Ty-induced promoter mutations. May exert its suppression effect through protein-protein interactions since does not present any of the motifs generally found in transcriptional activators or DNA binding proteins. The polypeptide is Protein SPT23 (SPT23) (Saccharomyces cerevisiae (strain ATCC 204508 / S288c) (Baker's yeast)).